We begin with the raw amino-acid sequence, 471 residues long: Phosphatidylinositol 4-kinase type 2-alpha (471 aa).

2 disordered regions span residues 1–25 (MDET…QCSP) and 48–101 (PGSA…PDDP). Residues 90–101 (AERERNKFPDDP) show a composition bias toward basic and acidic residues. The 329-residue stretch at 117–445 (DILPERISQG…VQTPPVIVET (329 aa)) folds into the PI3K/PI4K catalytic domain. Residues 123 to 129 (ISQGSSG) are G-loop. Residues 124–130 (SQGSSGS) and lysine 145 each bind ATP. The important for substrate binding stretch occupies residues 150-152 (EPY). The important for interaction with membranes stretch occupies residues 158-171 (KWTKWLQKLCCPCC). S-palmitoyl cysteine attachment occurs at residues cysteine 167, cysteine 168, cysteine 170, and cysteine 171. 254 to 257 (QLFV) is an ATP binding site. Positions 261 to 269 (KDADYWLRR) are important for interaction with membranes. Residues 298 to 306 (RNTDRGNDN) form a catalytic loop region. Residues 336 to 356 (AIDNGLAFPLKHPDSWRAYPF) are activation loop. Residue aspartate 338 coordinates ATP. Residues 351 to 360 (WRAYPFYWAW) form an important for interaction with membranes region.

Belongs to the PI3/PI4-kinase family. Type II PI4K subfamily.

Its subcellular location is the golgi apparatus. The protein resides in the trans-Golgi network membrane. The protein localises to the membrane raft. It is found in the endosome. It localises to the endosome membrane. Its subcellular location is the cytoplasmic vesicle. The protein resides in the cell projection. The protein localises to the dendrite. It is found in the presynaptic cell membrane. It localises to the synapse. Its subcellular location is the synaptosome. The protein resides in the mitochondrion. The protein localises to the membrane. It is found in the cell membrane. It localises to the perikaryon. Its subcellular location is the neuron projection. It carries out the reaction a 1,2-diacyl-sn-glycero-3-phospho-(1D-myo-inositol) + ATP = a 1,2-diacyl-sn-glycero-3-phospho-(1D-myo-inositol 4-phosphate) + ADP + H(+). In terms of biological role, membrane-bound phosphatidylinositol-4 kinase (PI4-kinase) that catalyzes the phosphorylation of phosphatidylinositol (PI) to phosphatidylinositol 4-phosphate (PI4P), a lipid that plays important roles in endocytosis, Golgi function, protein sorting and membrane trafficking. Besides, phosphorylation of phosphatidylinositol (PI) to phosphatidylinositol 4-phosphate (PI4P) is the first committed step in the generation of phosphatidylinositol 4,5-bisphosphate (PIP2), a precursor of the second messenger inositol 1,4,5-trisphosphate (InsP3). This chain is Phosphatidylinositol 4-kinase type 2-alpha (pi4k2a), found in Xenopus tropicalis (Western clawed frog).